Consider the following 174-residue polypeptide: MIFWKTFFQNSTVGESYENNFKKLFLLDKTFDKIELKDVYLSNTKNINLYELEQLCDSVGWVKRPLKKVKIALKHSSIIISLIQKNDSSTRLVGFARATSDNGFNATIWDVVIHPDFQGLGLGKVVMHQLIKQLRQAEISTITLFAEPDVISFYRKLGFIKDPDGVKGMFWYPR.

One can recognise an N-acetyltransferase domain in the interval Ser42–Arg174.

Belongs to the acetyltransferase family. Ycf52 subfamily.

The protein resides in the plastid. It is found in the chloroplast. This is an uncharacterized protein from Porphyra purpurea (Red seaweed).